A 234-amino-acid polypeptide reads, in one-letter code: Putative B3 domain-containing protein At2g18810 (234 aa).

Residues 55–88 form a disordered region; the sequence is CKNQDPEQNPNRVASSPSLCHVKSKRPQKGVSNK. A compositionally biased stretch (polar residues) spans 60–72; sequence PEQNPNRVASSPS. The TF-B3 DNA-binding region spans 87 to 185; the sequence is NKPILDMDFL…MLFFALVLSD (99 aa).

Its subcellular location is the nucleus. The protein is Putative B3 domain-containing protein At2g18810 of Arabidopsis thaliana (Mouse-ear cress).